The primary structure comprises 477 residues: Bifunctional protein HldE (477 aa).

The ribokinase stretch occupies residues 1-318; that stretch reads MKVTLPEFER…ENAVRGRADT (318 aa). Lys-179 carries the post-translational modification N6-acetyllysine. Residue 195–198 coordinates ATP; the sequence is NLSE. The active site involves Asp-264. The interval 344 to 477 is cytidylyltransferase; sequence MTNGVFDILH…IKKIQQDKKG (134 aa).

It in the N-terminal section; belongs to the carbohydrate kinase PfkB family. The protein in the C-terminal section; belongs to the cytidylyltransferase family. In terms of assembly, homodimer.

It catalyses the reaction D-glycero-beta-D-manno-heptose 7-phosphate + ATP = D-glycero-beta-D-manno-heptose 1,7-bisphosphate + ADP + H(+). It carries out the reaction D-glycero-beta-D-manno-heptose 1-phosphate + ATP + H(+) = ADP-D-glycero-beta-D-manno-heptose + diphosphate. Its pathway is nucleotide-sugar biosynthesis; ADP-L-glycero-beta-D-manno-heptose biosynthesis; ADP-L-glycero-beta-D-manno-heptose from D-glycero-beta-D-manno-heptose 7-phosphate: step 1/4. The protein operates within nucleotide-sugar biosynthesis; ADP-L-glycero-beta-D-manno-heptose biosynthesis; ADP-L-glycero-beta-D-manno-heptose from D-glycero-beta-D-manno-heptose 7-phosphate: step 3/4. Catalyzes the phosphorylation of D-glycero-D-manno-heptose 7-phosphate at the C-1 position to selectively form D-glycero-beta-D-manno-heptose-1,7-bisphosphate. Its function is as follows. Catalyzes the ADP transfer from ATP to D-glycero-beta-D-manno-heptose 1-phosphate, yielding ADP-D-glycero-beta-D-manno-heptose. This chain is Bifunctional protein HldE, found in Shigella sonnei (strain Ss046).